The sequence spans 1162 residues: DNA-directed RNA polymerase subunit beta (1162 aa).

The protein belongs to the RNA polymerase beta chain family. The RNAP catalytic core consists of 2 alpha, 1 beta, 1 beta' and 1 omega subunit. When a sigma factor is associated with the core the holoenzyme is formed, which can initiate transcription.

It carries out the reaction RNA(n) + a ribonucleoside 5'-triphosphate = RNA(n+1) + diphosphate. In terms of biological role, DNA-dependent RNA polymerase catalyzes the transcription of DNA into RNA using the four ribonucleoside triphosphates as substrates. The chain is DNA-directed RNA polymerase subunit beta from Clavibacter michiganensis subsp. michiganensis (strain NCPPB 382).